The chain runs to 210 residues: Glycerol-3-phosphate acyltransferase (210 aa).

The next 5 membrane-spanning stretches (helical) occupy residues 1–21, 53–73, 87–107, 122–142, and 147–167; these read MLLS…FPAG, GPAL…VVAA, IAWL…LPVW, VLLA…LLLL, and IVSL…LILP.

Belongs to the PlsY family. In terms of assembly, probably interacts with PlsX.

Its subcellular location is the cell inner membrane. It catalyses the reaction an acyl phosphate + sn-glycerol 3-phosphate = a 1-acyl-sn-glycero-3-phosphate + phosphate. It participates in lipid metabolism; phospholipid metabolism. Catalyzes the transfer of an acyl group from acyl-phosphate (acyl-PO(4)) to glycerol-3-phosphate (G3P) to form lysophosphatidic acid (LPA). This enzyme utilizes acyl-phosphate as fatty acyl donor, but not acyl-CoA or acyl-ACP. This is Glycerol-3-phosphate acyltransferase from Synechococcus elongatus (strain ATCC 33912 / PCC 7942 / FACHB-805) (Anacystis nidulans R2).